A 1826-amino-acid chain; its full sequence is Kinesin-like protein KIF13B (1826 aa).

Residues 5–353 form the Kinesin motor domain; that stretch reads KVKVAVRIRP…LRYADRAKHI (349 aa). Position 103-110 (103-110) interacts with ATP; sequence GQTGSGKS. Positions 364–439 form a coiled coil; that stretch reads NARIIRDLRE…ESLGISLQSS (76 aa). Residues 471 to 535 enclose the FHA domain; that stretch reads TLIGSANSQD…LHHGDRILWG (65 aa). A disordered region spans residues 546–582; it reads KKKKKAEREDEDQDPSMKNENSSEQLDVDGDSSSEVS. The segment covering 561-570 has biased composition (polar residues); the sequence is SMKNENSSEQ. 3 coiled-coil regions span residues 607–710, 752–772, and 1096–1143; these read MQSI…LDKR, SLEKLDNRLLDMRDLYQEWKE, and LNAL…ERNA. Residue serine 661 is modified to Phosphoserine. The disordered stretch occupies residues 1367 to 1420; that stretch reads EQLTGKGKLSRRSISSPNVNRLSGSRQDLIPSYSLGSNKGRWESQQDVSQTTVS. 2 stretches are compositionally biased toward polar residues: residues 1378–1392 and 1409–1420; these read RSISSPNVNRLSGSR and ESQQDVSQTTVS. Serine 1379 bears the Phosphoserine mark. The residue at position 1381 (serine 1381) is a Phosphoserine; by MARK2. A phosphoserine mark is found at serine 1382 and serine 1391. Serine 1410 carries the phosphoserine; by MARK2 modification. A phosphoserine mark is found at serine 1432, serine 1438, and serine 1537. Phosphothreonine is present on threonine 1545. Residue serine 1559 is modified to Phosphoserine. Over residues 1579–1607 the composition is skewed to low complexity; it reads SDALGPGLDAAAPPGSMPTAPEAEPEAPI. 2 disordered regions span residues 1579 to 1650 and 1662 to 1698; these read SDAL…RVRR and MLAGDPGCSPGAEGNAPAPGAGGQALASDSEEADEVP. Residues 1608–1624 show a composition bias toward pro residues; that stretch reads SHPPPPTAVPAEEPPGP. Serine 1644 is subject to Phosphoserine. Residues 1671-1688 show a composition bias toward low complexity; sequence PGAEGNAPAPGAGGQALA. Positions 1721–1763 constitute a CAP-Gly domain; it reads GPADFQEGTWVGVELDLPSGKNDGSIGGKQYFRCNPGYGLLVR. A Phosphoserine modification is found at serine 1797.

It belongs to the TRAFAC class myosin-kinesin ATPase superfamily. Kinesin family. As to quaternary structure, binds to DLG1 and DLG4. Interacts (when phosphorylated at Ser-1381 and Ser-1410) with 14-3-3. Post-translationally, phosphorylated at Ser-1381 and Ser-1410 by MARK2, promoting interaction with 14-3-3 and inhibiting microtubule-dependent accumulation and formation of axons. As to expression, ubiquitous.

It localises to the cytoplasm. The protein resides in the cytoskeleton. It is found in the cell projection. Its subcellular location is the axon. In terms of biological role, involved in reorganization of the cortical cytoskeleton. Regulates axon formation by promoting the formation of extra axons. May be functionally important for the intracellular trafficking of MAGUKs and associated protein complexes. In Homo sapiens (Human), this protein is Kinesin-like protein KIF13B (KIF13B).